A 344-amino-acid chain; its full sequence is Phosphoribosylformylglycinamidine cyclo-ligase (344 aa).

Belongs to the AIR synthase family.

The protein resides in the cytoplasm. The catalysed reaction is 2-formamido-N(1)-(5-O-phospho-beta-D-ribosyl)acetamidine + ATP = 5-amino-1-(5-phospho-beta-D-ribosyl)imidazole + ADP + phosphate + H(+). It participates in purine metabolism; IMP biosynthesis via de novo pathway; 5-amino-1-(5-phospho-D-ribosyl)imidazole from N(2)-formyl-N(1)-(5-phospho-D-ribosyl)glycinamide: step 2/2. The protein is Phosphoribosylformylglycinamidine cyclo-ligase of Anaeromyxobacter sp. (strain Fw109-5).